The primary structure comprises 215 residues: 3-isopropylmalate dehydratase small subunit (215 aa).

The protein belongs to the LeuD family. LeuD type 1 subfamily. As to quaternary structure, heterodimer of LeuC and LeuD.

The enzyme catalyses (2R,3S)-3-isopropylmalate = (2S)-2-isopropylmalate. It functions in the pathway amino-acid biosynthesis; L-leucine biosynthesis; L-leucine from 3-methyl-2-oxobutanoate: step 2/4. Catalyzes the isomerization between 2-isopropylmalate and 3-isopropylmalate, via the formation of 2-isopropylmaleate. The polypeptide is 3-isopropylmalate dehydratase small subunit (Xanthomonas euvesicatoria pv. vesicatoria (strain 85-10) (Xanthomonas campestris pv. vesicatoria)).